Consider the following 376-residue polypeptide: Heat-inducible transcription repressor HrcA (376 aa).

Belongs to the HrcA family.

In terms of biological role, negative regulator of class I heat shock genes (grpE-dnaK-dnaJ and groELS operons). Prevents heat-shock induction of these operons. The sequence is that of Heat-inducible transcription repressor HrcA from Chloroflexus aggregans (strain MD-66 / DSM 9485).